Here is a 647-residue protein sequence, read N- to C-terminus: ATP-dependent zinc metalloprotease FtsH (647 aa).

The disordered stretch occupies residues 1–33 (MARKSDEDTNPMDKFMDRLRGSPGDGGPGRPDP). Residues 1 to 39 (MARKSDEDTNPMDKFMDRLRGSPGDGGPGRPDPSQRKVH) are Cytoplasmic-facing. A helical membrane pass occupies residues 40-60 (FSIWYFILALLLIVWMQTYMG). Residues 61–134 (EQQSEKISYS…RFSGDVQNPW (74 aa)) are Periplasmic-facing. A helical transmembrane segment spans residues 135–155 (LGLITWWLLPFAIMIFFWSFL). The Cytoplasmic segment spans residues 156–647 (MRRMGGGPQG…DPVQVEGGAA (492 aa)). 227–234 (GAPGTGKT) is a binding site for ATP. His-449 contributes to the Zn(2+) binding site. Glu-450 is an active-site residue. Zn(2+) contacts are provided by His-453 and Asp-526.

In the central section; belongs to the AAA ATPase family. The protein in the C-terminal section; belongs to the peptidase M41 family. In terms of assembly, homohexamer. Requires Zn(2+) as cofactor.

Its subcellular location is the cell inner membrane. Its function is as follows. Acts as a processive, ATP-dependent zinc metallopeptidase for both cytoplasmic and membrane proteins. Plays a role in the quality control of integral membrane proteins. This is ATP-dependent zinc metalloprotease FtsH from Syntrophobacter fumaroxidans (strain DSM 10017 / MPOB).